The following is an 89-amino-acid chain: FMRFamide-like neuropeptides 19 (89 aa).

A signal peptide spans M1–G20. Residues Q21–E67 constitute a propeptide that is removed on maturation. F76 is modified (phenylalanine amide). The propeptide occupies A80 to G89.

The protein belongs to the FARP (FMRFamide related peptide) family. In terms of tissue distribution, each flp gene is expressed in a distinct set of neurons. Flp-19 is expressed in the URX interneurons, the serotonin and acetylcholine-expressing HSN neurons, and the AIN, AWA and BAG neurons.

It localises to the secreted. In terms of biological role, FMRFamides and FMRFamide-like peptides are neuropeptides. WANQVRF-amide inhibits the activity of dissected pharyngeal myogenic muscle system. This Caenorhabditis elegans protein is FMRFamide-like neuropeptides 19.